The primary structure comprises 596 residues: Proline--tRNA ligase (596 aa).

This sequence belongs to the class-II aminoacyl-tRNA synthetase family. ProS type 1 subfamily. Homodimer.

It is found in the cytoplasm. It catalyses the reaction tRNA(Pro) + L-proline + ATP = L-prolyl-tRNA(Pro) + AMP + diphosphate. Its function is as follows. Catalyzes the attachment of proline to tRNA(Pro) in a two-step reaction: proline is first activated by ATP to form Pro-AMP and then transferred to the acceptor end of tRNA(Pro). As ProRS can inadvertently accommodate and process non-cognate amino acids such as alanine and cysteine, to avoid such errors it has two additional distinct editing activities against alanine. One activity is designated as 'pretransfer' editing and involves the tRNA(Pro)-independent hydrolysis of activated Ala-AMP. The other activity is designated 'posttransfer' editing and involves deacylation of mischarged Ala-tRNA(Pro). The misacylated Cys-tRNA(Pro) is not edited by ProRS. The sequence is that of Proline--tRNA ligase from Prochlorococcus marinus (strain NATL2A).